The chain runs to 628 residues: MASNPGSDAALGTQNPLLSGSPRTKKFPLTEQEVFYMNCRAAYLTIFKSSLENIISKDQLYLALQHAGRNPSQKTINKYWTPQTAKLNFDDFCIILSKEKPTSKAELLKSFKKLDVNDDGAILHSDLQKYLTKRGEKMTQEEVNAVINLADINANGKFDYVKFCKLYMTTSEQCLKTTLERLEADSKLRRQQFGSHMEGSPERGPSPAPKPSPRVIRKNDQETFSSKGDTSHALLSTTRKFKTSVSFTMTMSANSNQDSTLTEPNLKDWQCAQSKGCFFLEEDGEVVSHQYKMHIAQRSVLYLTIKPLYLSQVEGKRCPWLSVDTALYILKKNENPAEPQLMCFTELRNREVFGWTGELEAGIYWLIPSTTGCRLKKETKPVTEEAQLVHRDETGELSLTSEFRSTLSEIFEVIDLDGNGLISLEEYNFFELRTSGEKCDEDAWAVCRENFDTKKNELTRQGFMDLHLMEANDREGDPLDLWVTLHSMGYNKALELTEACPFVINIYAERCKPRIKVVHMEACSGQLEKAICKSVLDRSDAKVMDGYENIIVHTCNYDTWITSIIENKSDNKVIIHINNELSKNCVNNRGLNIFAVEVAPRSTMVCQHVMPLNEQEEWIYCCVYSLVA.

Polar residues predominate over residues 1-22 (MASNPGSDAALGTQNPLLSGSP). Positions 1–24 (MASNPGSDAALGTQNPLLSGSPRT) are disordered. EF-hand domains lie at 102-137 (TSKAELLKSFKKLDVNDDGAILHSDLQKYLTKRGEK) and 138-173 (MTQEEVNAVINLADINANGKFDYVKFCKLYMTTSEQ). Positions 192–231 (QFGSHMEGSPERGPSPAPKPSPRVIRKNDQETFSSKGDTS) are disordered. Phosphoserine occurs at positions 200 and 212. Over residues 222-231 (ETFSSKGDTS) the composition is skewed to polar residues. Residues 402–437 (EFRSTLSEIFEVIDLDGNGLISLEEYNFFELRTSGE) form the EF-hand 3 domain. The Ca(2+) site is built by D415, D417, N419, and E426.

In terms of assembly, component of the EvC complex composed of EFCAB7, IQCE, EVC2 and EVC; built from two subcomplexes, EVC2:EVC and EFCAB7:IQCE. Interacts (via EF-hand 1 and 2) with IQCE (via N-terminus); this interaction anchors the EVC-EVC2 complex in a signaling microdomain at the base of cilia and stimulates the Hedgehog (Hh) pathway. Interacts with EVC2 (via N-terminal end). Interacts with EVC.

The protein localises to the cell projection. It is found in the cilium membrane. Functionally, component of the EvC complex that positively regulates ciliary Hedgehog (Hh) signaling. Required for the localization of the EVC2:EVC subcomplex at the base of primary cilia. This is EF-hand calcium-binding domain-containing protein 7 (Efcab7) from Mus musculus (Mouse).